Consider the following 152-residue polypeptide: Large ribosomal subunit protein bL9 (152 aa).

It belongs to the bacterial ribosomal protein bL9 family.

In terms of biological role, binds to the 23S rRNA. The polypeptide is Large ribosomal subunit protein bL9 (Prochlorococcus marinus (strain SARG / CCMP1375 / SS120)).